A 323-amino-acid chain; its full sequence is tRNA U34 carboxymethyltransferase (323 aa).

Carboxy-S-adenosyl-L-methionine contacts are provided by residues Lys91, Trp105, Lys110, Gly130, 152–154 (DPT), 181–182 (IE), Met196, Tyr200, and Arg315.

It belongs to the class I-like SAM-binding methyltransferase superfamily. CmoB family. Homotetramer.

It carries out the reaction carboxy-S-adenosyl-L-methionine + 5-hydroxyuridine(34) in tRNA = 5-carboxymethoxyuridine(34) in tRNA + S-adenosyl-L-homocysteine + H(+). In terms of biological role, catalyzes carboxymethyl transfer from carboxy-S-adenosyl-L-methionine (Cx-SAM) to 5-hydroxyuridine (ho5U) to form 5-carboxymethoxyuridine (cmo5U) at position 34 in tRNAs. The protein is tRNA U34 carboxymethyltransferase of Cronobacter sakazakii (strain ATCC BAA-894) (Enterobacter sakazakii).